Reading from the N-terminus, the 29-residue chain is Cytochrome b6-f complex subunit 8 (29 aa).

The chain crosses the membrane as a helical span at residues 3 to 23 (TVSLAWAALMVVFTFSLSLVV).

The protein belongs to the PetN family. As to quaternary structure, the 4 large subunits of the cytochrome b6-f complex are cytochrome b6, subunit IV (17 kDa polypeptide, PetD), cytochrome f and the Rieske protein, while the 4 small subunits are PetG, PetL, PetM and PetN. The complex functions as a dimer.

The protein localises to the plastid. Its subcellular location is the chloroplast thylakoid membrane. Functionally, component of the cytochrome b6-f complex, which mediates electron transfer between photosystem II (PSII) and photosystem I (PSI), cyclic electron flow around PSI, and state transitions. The chain is Cytochrome b6-f complex subunit 8 from Chloranthus spicatus (Chulantree).